Consider the following 509-residue polypeptide: Probable cytochrome P450 519B1 (509 aa).

The helical transmembrane segment at 1-21 (MNLINLILYFILFWIVFDFIR) threads the bilayer. Cys-456 contacts heme.

The protein belongs to the cytochrome P450 family. Heme is required as a cofactor.

The protein resides in the membrane. The protein is Probable cytochrome P450 519B1 (cyp519B1) of Dictyostelium discoideum (Social amoeba).